The following is a 344-amino-acid chain: Fructose-bisphosphate aldolase (344 aa).

S53 provides a ligand contact to D-glyceraldehyde 3-phosphate. The active-site Proton donor is the D95. Residues H96, D131, E161, and H212 each coordinate Zn(2+). G213 contributes to the dihydroxyacetone phosphate binding site. H252 contributes to the Zn(2+) binding site. Residues 253–255 (GGS) and 274–277 (NVDT) contribute to the dihydroxyacetone phosphate site.

The protein belongs to the class II fructose-bisphosphate aldolase family. Zn(2+) serves as cofactor.

It carries out the reaction beta-D-fructose 1,6-bisphosphate = D-glyceraldehyde 3-phosphate + dihydroxyacetone phosphate. Its pathway is carbohydrate degradation; glycolysis; D-glyceraldehyde 3-phosphate and glycerone phosphate from D-glucose: step 4/4. In terms of biological role, catalyzes the aldol condensation of dihydroxyacetone phosphate (DHAP or glycerone-phosphate) with glyceraldehyde 3-phosphate (G3P) to form fructose 1,6-bisphosphate (FBP) in gluconeogenesis and the reverse reaction in glycolysis. This chain is Fructose-bisphosphate aldolase (fba), found in Corynebacterium glutamicum (strain ATCC 13032 / DSM 20300 / JCM 1318 / BCRC 11384 / CCUG 27702 / LMG 3730 / NBRC 12168 / NCIMB 10025 / NRRL B-2784 / 534).